The primary structure comprises 506 residues: Arabinose import ATP-binding protein AraG (506 aa).

2 ABC transporter domains span residues 10–245 and 253–501; these read LEFC…MVGR and YRSR…MLGN. 42 to 49 lines the ATP pocket; that stretch reads GENGAGKS.

It belongs to the ABC transporter superfamily. Arabinose importer (TC 3.A.1.2.2) family. The complex is composed of two ATP-binding proteins (AraG), two transmembrane proteins (AraH) and a solute-binding protein (AraF).

It localises to the cell inner membrane. The enzyme catalyses L-arabinose(out) + ATP + H2O = L-arabinose(in) + ADP + phosphate + H(+). In terms of biological role, part of the ABC transporter complex AraFGH involved in arabinose import. Responsible for energy coupling to the transport system. This Vibrio parahaemolyticus serotype O3:K6 (strain RIMD 2210633) protein is Arabinose import ATP-binding protein AraG.